An 85-amino-acid polypeptide reads, in one-letter code: Beta-insect depressant toxin BjIT2 (85 aa).

Positions 1–21 are cleaved as a signal peptide; the sequence is MKLLLLLVISASMLLECLVNA. An LCN-type CS-alpha/beta domain is found at 22-82; sequence DGYIRKKDGC…TWKSSTNTCG (61 aa). 4 disulfide bridges follow: Cys-31/Cys-81, Cys-35/Cys-56, Cys-42/Cys-63, and Cys-46/Cys-65. The propeptide at 83–85 is removed by a carboxypeptidase; it reads RKK.

This sequence belongs to the long (4 C-C) scorpion toxin superfamily. Sodium channel inhibitor family. Beta subfamily. Post-translationally, C-terminal basic residues are removed by a carboxypeptidase. In terms of tissue distribution, expressed by the venom gland.

It localises to the secreted. In terms of biological role, depressant insect beta-toxins cause a transient contraction paralysis followed by a slow flaccid paralysis. They bind voltage-independently at site-4 of sodium channels (Nav) and shift the voltage of activation toward more negative potentials thereby affecting sodium channel activation and promoting spontaneous and repetitive firing. This toxin is active only on insects. The chain is Beta-insect depressant toxin BjIT2 from Hottentotta judaicus (Black scorpion).